A 348-amino-acid polypeptide reads, in one-letter code: 4-hydroxy-3-methylbut-2-enyl diphosphate reductase (348 aa).

A [4Fe-4S] cluster-binding site is contributed by C21. The (2E)-4-hydroxy-3-methylbut-2-enyl diphosphate site is built by H50 and H86. Residues H50 and H86 each contribute to the dimethylallyl diphosphate site. Isopentenyl diphosphate contacts are provided by H50 and H86. C108 contributes to the [4Fe-4S] cluster binding site. H136 contacts (2E)-4-hydroxy-3-methylbut-2-enyl diphosphate. H136 lines the dimethylallyl diphosphate pocket. Isopentenyl diphosphate is bound at residue H136. The active-site Proton donor is the E138. Residue T177 participates in (2E)-4-hydroxy-3-methylbut-2-enyl diphosphate binding. A [4Fe-4S] cluster-binding site is contributed by C207. (2E)-4-hydroxy-3-methylbut-2-enyl diphosphate is bound by residues S235, S236, N237, and S280. S235, S236, N237, and S280 together coordinate dimethylallyl diphosphate. 4 residues coordinate isopentenyl diphosphate: S235, S236, N237, and S280.

The protein belongs to the IspH family. Requires [4Fe-4S] cluster as cofactor.

It catalyses the reaction isopentenyl diphosphate + 2 oxidized [2Fe-2S]-[ferredoxin] + H2O = (2E)-4-hydroxy-3-methylbut-2-enyl diphosphate + 2 reduced [2Fe-2S]-[ferredoxin] + 2 H(+). The enzyme catalyses dimethylallyl diphosphate + 2 oxidized [2Fe-2S]-[ferredoxin] + H2O = (2E)-4-hydroxy-3-methylbut-2-enyl diphosphate + 2 reduced [2Fe-2S]-[ferredoxin] + 2 H(+). It functions in the pathway isoprenoid biosynthesis; dimethylallyl diphosphate biosynthesis; dimethylallyl diphosphate from (2E)-4-hydroxy-3-methylbutenyl diphosphate: step 1/1. It participates in isoprenoid biosynthesis; isopentenyl diphosphate biosynthesis via DXP pathway; isopentenyl diphosphate from 1-deoxy-D-xylulose 5-phosphate: step 6/6. Functionally, catalyzes the conversion of 1-hydroxy-2-methyl-2-(E)-butenyl 4-diphosphate (HMBPP) into a mixture of isopentenyl diphosphate (IPP) and dimethylallyl diphosphate (DMAPP). Acts in the terminal step of the DOXP/MEP pathway for isoprenoid precursor biosynthesis. The chain is 4-hydroxy-3-methylbut-2-enyl diphosphate reductase from Agrobacterium fabrum (strain C58 / ATCC 33970) (Agrobacterium tumefaciens (strain C58)).